The following is a 680-amino-acid chain: Dihydroxyacetone phosphate acyltransferase (680 aa).

2 positions are modified to phosphoserine: serine 12 and serine 17. The HXXXXD motif signature appears at 162–167; the sequence is HRSYID. Position 643 is an N6-acetyllysine (lysine 643). Positions 678-680 match the Microbody targeting signal motif; it reads AKL.

The protein belongs to the GPAT/DAPAT family. Part of a heterotrimeric complex composed of GNPAT, AGPS and a modified form of GNPAT.

The protein resides in the peroxisome membrane. The catalysed reaction is dihydroxyacetone phosphate + an acyl-CoA = a 1-acylglycerone 3-phosphate + CoA. It catalyses the reaction dihydroxyacetone phosphate + hexadecanoyl-CoA = 1-hexadecanoylglycerone 3-phosphate + CoA. Its pathway is membrane lipid metabolism; glycerophospholipid metabolism. Dihydroxyacetonephosphate acyltransferase catalyzing the first step in the biosynthesis of plasmalogens, a subset of phospholipids that differ from other glycerolipids by having an alkyl chain attached through a vinyl ether linkage at the sn-1 position of the glycerol backbone, and which unique physical properties have an impact on various aspects of cell signaling and membrane biology. The protein is Dihydroxyacetone phosphate acyltransferase of Homo sapiens (Human).